A 331-amino-acid polypeptide reads, in one-letter code: Putative mitochondrial 2-oxoglutarate/malate carrier protein (331 aa).

Solcar repeat units lie at residues 39–128 (VRAA…FMSR), 140–231 (VGFK…AKAQ), and 239–329 (SSKV…LGWL). 6 consecutive transmembrane segments (helical) span residues 42–62 (ALPFINGGLSGMVATTVIQPI), 103–121 (GLSAGLLRQAVYTTARIGC), 148–168 (AGLAAGGLAAMIGNPADLALI), 199–219 (GVAALWAGAAPTVVRAMALNF), 245–265 (LSASAIAGFFASFFSLPFDFV), and 309–329 (YVRIAPHAMVTLLVADYLGWL).

Belongs to the mitochondrial carrier (TC 2.A.29) family.

The protein resides in the mitochondrion inner membrane. Its function is as follows. Catalyzes the transport of 2-oxoglutarate across the inner mitochondrial membrane. The protein is Putative mitochondrial 2-oxoglutarate/malate carrier protein (mic-33) of Neurospora crassa (strain ATCC 24698 / 74-OR23-1A / CBS 708.71 / DSM 1257 / FGSC 987).